We begin with the raw amino-acid sequence, 309 residues long: Zinc transporter ZIP2 (309 aa).

Residues 1–8 are Extracellular-facing; it reads MEQLLGIK. Residues 9-29 form a helical membrane-spanning segment; it reads LGCLFALLALTLGCGLTPICF. The Cytoplasmic segment spans residues 30-46; the sequence is KWFQIDAARGHHRLVLR. The helical transmembrane segment at 47–67 threads the bilayer; the sequence is LLGCISAGVFLGAGFMHMTAE. Topologically, residues 68 to 103 are extracellular; that stretch reads ALEEIESQIQKFMVQNRSASERNSSGDADSAHMEYP. The helical transmembrane segment at 104–124 threads the bilayer; it reads YGELIISLGFFFVFFLESLAL. The Cytoplasmic portion of the chain corresponds to 125–164; the sequence is QCCPGAAGGSTVQDEEWGGAHIFELHSHGHLPSPSKGPLR. A helical transmembrane segment spans residues 165–185; it reads ALVLLLSLSFHSVFEGLAVGL. Zn(2+) contacts are provided by His175 and Glu179. The Extracellular segment spans residues 186–189; sequence QPTV. The chain crosses the membrane as a helical span at residues 190–210; sequence AATVQLCLAVLAHKGLVVFGV. His202 is a binding site for Zn(2+). The Cytoplasmic portion of the chain corresponds to 211–224; the sequence is GMRLVHLGTSSRWA. The helical transmembrane segment at 225-245 threads the bilayer; it reads VFSILLLALMSPLGLAVGLAV. Over 246 to 258 the chain is Extracellular; that stretch reads TGGDSEGGRGLAQ. The helical transmembrane segment at 259–279 threads the bilayer; it reads AVLEGVAAGTFLYVTFLEILP. Glu276 serves as a coordination point for Zn(2+). At 280–288 the chain is on the cytoplasmic side; that stretch reads RELASPEAP. A helical membrane pass occupies residues 289–309; sequence LAKWSCVAAGFAFMAFIALWA.

Belongs to the ZIP transporter (TC 2.A.5) family. As to expression, expressed only in prostate and uterine epithelial cells.

The protein localises to the cell membrane. The enzyme catalyses Zn(2+)(in) = Zn(2+)(out). It carries out the reaction Cd(2+)(in) = Cd(2+)(out). Its activity is regulated as follows. Activity is increased at acidic pH (6.5). Inhibited in the presence of high extracellular K(+). Functionally, transporter for the divalent cation Zn(2+). Mediates the influx of Zn(2+) into cells from extracellular space. The Zn(2+) uniporter activity is independent of H(+)-driving force, but is modulated by extracellular pH and membrane potential. Also transports other divalent cations Zn(2+), Cd2(+), Cu2(+), Co2(+) in the order of decreasing affinity, respectively. In the skin, aids in the differentiation of keratinocytes in the epidermis. The polypeptide is Zinc transporter ZIP2 (Homo sapiens (Human)).